The primary structure comprises 1091 residues: Ninein homolog (1091 aa).

A sufficient for binding to microtubules region spans residues 1–361 (MEVSADPYEQ…AVEVDERHAS (361 aa)). Disordered regions lie at residues 100-216 (YIES…TTSP), 456-483 (AQTS…KEEE), 525-602 (KAKK…EELT), and 616-639 (KAAK…SLEQ). Residues Ser103, Ser107, Ser108, Ser113, and Ser141 each carry the phosphoserine modification. A Phosphothreonine modification is found at Thr144. A compositionally biased stretch (polar residues) spans 168–177 (VQRSSSQSDL). A sufficient for interaction with ens region spans residues 487-526 (LMEKLAALQMENAQLRDKTDELTIEIESLNVELIRSKTKA). Composition is skewed to basic and acidic residues over residues 527–537 (KKQEKQEKQED) and 547–563 (RRGD…ESPR). Ser594 carries the post-translational modification Phosphoserine. The segment covering 616 to 634 (KAAKEGRSLTPESRSKELE) has biased composition (basic and acidic residues). Residues Ser701 and Ser714 each carry the phosphoserine modification. A disordered region spans residues 799 to 919 (AKSLADSKDE…TSCLSHEKCS (121 aa)). Residues 822 to 845 (SHKTASRNNLTTSETSIFSTTPFE) show a composition bias toward polar residues. Residues 846 to 860 (SSQSGPSPTNSGNSN) show a composition bias toward low complexity. Polar residues predominate over residues 894–913 (ETSSTASGKSFESNSKTSCL).

As to quaternary structure, interacts with ens.

The protein resides in the cytoplasm. It localises to the cytoskeleton. The protein localises to the microtubule organizing center. Its subcellular location is the centrosome. It is found in the perinuclear region. Its function is as follows. Required for the positioning and anchorage of the microtubule minus-ends in various cells. In fat body cells, part of perinuclear non-centrosomal microtubule-organizing centers (ncMTOCs) which function to accommodate the organization of microtubule (MT) networks to control nuclear positioning and dynein motor-based retrograde endosomal trafficking. Within the ncMTOCs, Msp300 and shot anchors the ncMTOC at the nuclear surface and recruits the MT minus-end regulators Patronin and Nin for assembly, anchoring and/or stabilization of circumferential and radial MTs at the ncMTOC. This protein may also function with Patronin to recruit msps to the ncMTOC for the gamma-tubulin-independent elongation of radial MTs. In embryonic myotubes and larval myofibers, functions with ens to regulate myonuclear positioning and, as a consequence, is involved in muscle development. Likely functions by positively regulating ens. Essential for embryogenesis, likely by contributing to accurate chromosome segregation during early embryonic nuclear divisions. However, other reports found that it is not essential for embryogenesis or embryonic cellular divisions. The chain is Ninein homolog from Drosophila melanogaster (Fruit fly).